The chain runs to 205 residues: Ypt/Rab-type GTPase ypt7 (205 aa).

GTP is bound by residues 17-23, 33-40, Gly66, 125-128, and 157-159; these read SGVGKTS, FSASYKAT, NKID, and SAK. The Effector region motif lies at 37 to 45; sequence YKATIGADF. Residues Cys203 and Cys205 are each lipidated (S-geranylgeranyl cysteine). A Cysteine methyl ester modification is found at Cys205.

Belongs to the small GTPase superfamily. Rab family. Interacts with the Rab GDP dissociation inhibitor GDI1.

Its subcellular location is the vacuole. Rab activation is generally mediated by a guanine exchange factor (GEF), while inactivation through hydrolysis of bound GTP is catalyzed by a GTPase activating protein (GAP). In terms of biological role, ypt/Rab-type GTPases are key regulators of membrane trafficking and intracellular vesicular transport. They act as molecular switches that convert between GTP-bound and GDP-bound states, and regulate virtually all steps of membrane traffic from the formation of the transport vesicle at the donor membrane to its fusion at the target membrane. In the GDP-bound state, Ypt proteins are predominantly cytosolic, solubilized through the interaction with a GDP dissociation inhibitor (GDI). In the GTP-bound state, the proteins are membrane bound and interact with specific effector proteins that select cargo, promote vesicle movement, or verify the correct site of fusion. Required for fungal morphogenesis, vacuole fusion, autophagy, stress resistance and pathogenicity. The sequence is that of Ypt/Rab-type GTPase ypt7 from Pyricularia oryzae (strain 70-15 / ATCC MYA-4617 / FGSC 8958) (Rice blast fungus).